Consider the following 464-residue polypeptide: Capsule biosynthesis protein CapB (464 aa).

A helical transmembrane segment spans residues 65–85; that stretch reads LIQMIFIIGICTVFLIIYGIW.

It is found in the cell membrane. The protein operates within capsule biogenesis; capsule polysaccharide biosynthesis. Functionally, essential for the synthesis of the polyglutamate capsule of B.anthracis which is one of the principal virulence factors during anthrax infection. May form a polyglutamyl synthetase complex together with proteins CapA and CapC. This Bacillus anthracis protein is Capsule biosynthesis protein CapB (capB).